The sequence spans 264 residues: MKMKKWTVLVVAALLAVLSACGNGNSSSKEDDNVLHVGATGQSYPFAYKENGKLTGFDVEVMEAVAKKIDMKLDWKLLEFSGLMGELQTGKLDTISNQVAVTDERKETYNFTKPYAYAGTQIVVKKDNTDIKSVDDLKGKTVAAVLGSNHAKNLESKDPDKKINIKTYETQEGTLKDVAYGRVDAYVNSRTVLIAQIKKTGLPLKLAGDPIVYEQVAFPFAKDDAHDKLRKKVNKALDELRKDGTLKKLSEKYFNEDITVEQKH.

The signal sequence occupies residues 1–20 (MKMKKWTVLVVAALLAVLSA). A lipid anchor (N-palmitoyl cysteine) is attached at cysteine 21. A lipid anchor (S-diacylglycerol cysteine) is attached at cysteine 21.

The protein belongs to the bacterial solute-binding protein 3 family. In terms of assembly, the complex is composed of two ATP-binding proteins (YxeO), two transmembrane proteins (YxeN) and a solute-binding protein (YxeM).

Its subcellular location is the cell membrane. It is found in the membrane raft. Functionally, probably part of the ABC transporter complex YxeMNO that could be involved in amino-acid import. May transport S-methylcysteine. The polypeptide is Probable amino-acid-binding protein YxeM (yxeM) (Bacillus subtilis (strain 168)).